The following is a 288-amino-acid chain: ATP synthase gamma chain (288 aa).

Belongs to the ATPase gamma chain family. F-type ATPases have 2 components, CF(1) - the catalytic core - and CF(0) - the membrane proton channel. CF(1) has five subunits: alpha(3), beta(3), gamma(1), delta(1), epsilon(1). CF(0) has three main subunits: a, b and c.

The protein resides in the cell inner membrane. Produces ATP from ADP in the presence of a proton gradient across the membrane. The gamma chain is believed to be important in regulating ATPase activity and the flow of protons through the CF(0) complex. The protein is ATP synthase gamma chain of Vibrio parahaemolyticus serotype O3:K6 (strain RIMD 2210633).